The sequence spans 144 residues: Cytochrome c-type biogenesis protein CcmE (144 aa).

The Cytoplasmic portion of the chain corresponds to 1 to 7 (MKPRHKR). A helical; Signal-anchor for type II membrane protein transmembrane segment spans residues 8–28 (ALMIVAALAVIGIAALLILNA). At 29-144 (LNSNIALYVT…EQAQKNGSAK (116 aa)) the chain is on the extracellular side. The heme site is built by His-121 and Tyr-125.

This sequence belongs to the CcmE/CycJ family.

Its subcellular location is the cell membrane. Functionally, heme chaperone required for the biogenesis of c-type cytochromes. Transiently binds heme delivered by CcmC and transfers the heme to apo-cytochromes in a process facilitated by CcmF and CcmH. This is Cytochrome c-type biogenesis protein CcmE from Polynucleobacter asymbioticus (strain DSM 18221 / CIP 109841 / QLW-P1DMWA-1) (Polynucleobacter necessarius subsp. asymbioticus).